We begin with the raw amino-acid sequence, 273 residues long: Large ribosomal subunit protein uL2cz/uL2cy (273 aa).

2 disordered regions span residues 1-22 and 225-273; these read MAKH…DRQV and PVDH…RRRK.

The protein belongs to the universal ribosomal protein uL2 family. In terms of assembly, part of the 50S ribosomal subunit.

It is found in the plastid. The protein localises to the chloroplast. The protein is Large ribosomal subunit protein uL2cz/uL2cy (rpl2-A) of Zea mays (Maize).